A 129-amino-acid chain; its full sequence is D-ribose pyranase (129 aa).

The active-site Proton donor is His20. Substrate-binding positions include Asp28, His96, and Tyr118–Asn120.

This sequence belongs to the RbsD / FucU family. RbsD subfamily. Homodecamer.

It is found in the cytoplasm. It catalyses the reaction beta-D-ribopyranose = beta-D-ribofuranose. It participates in carbohydrate metabolism; D-ribose degradation; D-ribose 5-phosphate from beta-D-ribopyranose: step 1/2. In terms of biological role, catalyzes the interconversion of beta-pyran and beta-furan forms of D-ribose. In Exiguobacterium sibiricum (strain DSM 17290 / CCUG 55495 / CIP 109462 / JCM 13490 / 255-15), this protein is D-ribose pyranase.